Reading from the N-terminus, the 428-residue chain is AP2-like ethylene-responsive transcription factor At2g41710 (428 aa).

Positions 1-10 (MASVSSSDQG) are enriched in polar residues. Residues 1 to 28 (MASVSSSDQGPKTEAGCSGGGGGESSET) form a disordered region. Positions 70 to 136 (IYRGVTRHRW…WGPGTLINFP (67 aa)) form a DNA-binding region, AP2/ERF.

This sequence belongs to the AP2/ERF transcription factor family. AP2 subfamily.

The protein localises to the nucleus. In terms of biological role, probably acts as a transcriptional activator. Binds to the GCC-box pathogenesis-related promoter element. May be involved in the regulation of gene expression by stress factors and by components of stress signal transduction pathways. This chain is AP2-like ethylene-responsive transcription factor At2g41710, found in Arabidopsis thaliana (Mouse-ear cress).